The primary structure comprises 474 residues: Bifunctional protein GlmU (474 aa).

Residues 1-232 (MSALDVIIMA…ALQVAGVNSP (232 aa)) are pyrophosphorylase. Residues K23, Q78, 83–84 (GT), 105–107 (SGD), G142, E157, and N230 each bind UDP-N-acetyl-alpha-D-glucosamine. D107 is a Mg(2+) binding site. Position 230 (N230) interacts with Mg(2+). Residues 233–253 (LQLAELERAHQLAQARALMEQ) are linker. The interval 254 to 474 (GVRLADPARF…WQRPAKLPKA (221 aa)) is N-acetyltransferase. UDP-N-acetyl-alpha-D-glucosamine is bound by residues R349 and K367. H379 acts as the Proton acceptor in catalysis. Residues Y382 and N393 each contribute to the UDP-N-acetyl-alpha-D-glucosamine site. Acetyl-CoA is bound by residues A396, 402-403 (NY), S421, G439, and R456. The interval 454 to 474 (VARGKQVTKENWQRPAKLPKA) is disordered.

In the N-terminal section; belongs to the N-acetylglucosamine-1-phosphate uridyltransferase family. It in the C-terminal section; belongs to the transferase hexapeptide repeat family. Homotrimer. It depends on Mg(2+) as a cofactor.

Its subcellular location is the cytoplasm. It carries out the reaction alpha-D-glucosamine 1-phosphate + acetyl-CoA = N-acetyl-alpha-D-glucosamine 1-phosphate + CoA + H(+). The enzyme catalyses N-acetyl-alpha-D-glucosamine 1-phosphate + UTP + H(+) = UDP-N-acetyl-alpha-D-glucosamine + diphosphate. It functions in the pathway nucleotide-sugar biosynthesis; UDP-N-acetyl-alpha-D-glucosamine biosynthesis; N-acetyl-alpha-D-glucosamine 1-phosphate from alpha-D-glucosamine 6-phosphate (route II): step 2/2. The protein operates within nucleotide-sugar biosynthesis; UDP-N-acetyl-alpha-D-glucosamine biosynthesis; UDP-N-acetyl-alpha-D-glucosamine from N-acetyl-alpha-D-glucosamine 1-phosphate: step 1/1. Its pathway is bacterial outer membrane biogenesis; LPS lipid A biosynthesis. Catalyzes the last two sequential reactions in the de novo biosynthetic pathway for UDP-N-acetylglucosamine (UDP-GlcNAc). The C-terminal domain catalyzes the transfer of acetyl group from acetyl coenzyme A to glucosamine-1-phosphate (GlcN-1-P) to produce N-acetylglucosamine-1-phosphate (GlcNAc-1-P), which is converted into UDP-GlcNAc by the transfer of uridine 5-monophosphate (from uridine 5-triphosphate), a reaction catalyzed by the N-terminal domain. In Paracidovorax citrulli (strain AAC00-1) (Acidovorax citrulli), this protein is Bifunctional protein GlmU.